The sequence spans 203 residues: Large ribosomal subunit protein bL25 (203 aa).

It belongs to the bacterial ribosomal protein bL25 family. CTC subfamily. Part of the 50S ribosomal subunit; part of the 5S rRNA/L5/L18/L25 subcomplex. Contacts the 5S rRNA. Binds to the 5S rRNA independently of L5 and L18.

This is one of the proteins that binds to the 5S RNA in the ribosome where it forms part of the central protuberance. This chain is Large ribosomal subunit protein bL25, found in Rickettsia typhi (strain ATCC VR-144 / Wilmington).